A 533-amino-acid chain; its full sequence is Cytochrome P450 monooxygenase ltmK (533 aa).

The helical transmembrane segment at 27–47 (VHWLQVIVALLVLIVCIFLYW) threads the bilayer. Asn-116 carries N-linked (GlcNAc...) asparagine glycosylation. Cys-473 is a binding site for heme. N-linked (GlcNAc...) asparagine glycosylation is present at Asn-528.

Belongs to the cytochrome P450 family. The cofactor is heme.

It is found in the membrane. The protein operates within secondary metabolite biosynthesis. Functionally, cytochrome P450 monooxygenase; part of the gene clusters that mediates the biosynthesis of lolitrems, indole-diterpene mycotoxins that are potent tremorgens in mammals, and are synthesized by clavicipitaceous fungal endophytes in association with their grass hosts. The geranylgeranyl diphosphate (GGPP) synthase ltmG is proposed to catalyze the first step in lolitrem biosynthesis. LtmG catalyzes a series of iterative condensations of isopentenyl diphosphate (IPP) with dimethylallyl diphosphate (DMAPP), geranyl diphosphate (GPP), and farnesyl diphosphate (FPP), to form GGPP. GGPP then condenses with indole-3-glycerol phosphate to form 3-geranylgeranylindole, an acyclic intermediate, to be incorporated into paxilline. Either ltmG or ltmC could be responsible for this step, as both are putative prenyl transferases. The FAD-dependent monooxygenase ltmM then catalyzes the epoxidation of the two terminal alkenes of the geranylgeranyl moiety, which is subsequently cyclized by ltmB, to paspaline. The cytochrome P450 monooxygenases ltmQ and ltmP can sequentially oxidize paspaline to terpendole E and terpendole F. Alternatively, ltmP converts paspaline to an intermediate which is oxidized by ltmQ to terpendole F. LtmF, ltmK, ltmE and ltmJ appear to be unique to the epichloe endophytes. The prenyltransferase ltmF is involved in the 27-hydroxyl-O-prenylation. The cytochrome P450 monooxygenase ltmK is required for the oxidative acetal ring formation. The multi-functional prenyltransferase ltmE is required for C20- and C21-prenylations of the indole ring of paspalanes and acts together with the cytochrome P450 monooxygenase ltmJ to yield lolitremanes by multiple oxidations and ring closures. The stereoisomer pairs of lolitriol and lolitrem N or lolitrem B and lolitrem F may be attributed to variations in the way in which ring closure can occur under the action of ltmJ. While the major product of this pathway is lolitrem B, the prenyl transferases and cytochrome P450 monooxygenases identified in this pathway have a remarkable versatility in their regio- and stereo-specificities to generate a diverse range of metabolites that are products of a metabolic grid rather than a linear pathway. This is Cytochrome P450 monooxygenase ltmK from Epichloe festucae var. lolii (Neotyphodium lolii).